The sequence spans 129 residues: Ribosome-binding factor A (129 aa).

Belongs to the RbfA family. As to quaternary structure, monomer. Binds 30S ribosomal subunits, but not 50S ribosomal subunits or 70S ribosomes.

It is found in the cytoplasm. Its function is as follows. One of several proteins that assist in the late maturation steps of the functional core of the 30S ribosomal subunit. Associates with free 30S ribosomal subunits (but not with 30S subunits that are part of 70S ribosomes or polysomes). Required for efficient processing of 16S rRNA. May interact with the 5'-terminal helix region of 16S rRNA. The sequence is that of Ribosome-binding factor A from Desulfosudis oleivorans (strain DSM 6200 / JCM 39069 / Hxd3) (Desulfococcus oleovorans).